A 140-amino-acid chain; its full sequence is Large-conductance mechanosensitive channel (140 aa).

The next 2 helical transmembrane spans lie at 9 to 29 (AFAL…GAAF) and 86 to 106 (GSFL…FLMV).

This sequence belongs to the MscL family. As to quaternary structure, homopentamer.

Its subcellular location is the cell inner membrane. In terms of biological role, channel that opens in response to stretch forces in the membrane lipid bilayer. May participate in the regulation of osmotic pressure changes within the cell. This Anaeromyxobacter dehalogenans (strain 2CP-1 / ATCC BAA-258) protein is Large-conductance mechanosensitive channel.